Here is a 221-residue protein sequence, read N- to C-terminus: Ribosomal RNA small subunit methyltransferase G (221 aa).

S-adenosyl-L-methionine is bound by residues glycine 85, phenylalanine 90, 136–137 (AE), and arginine 149.

The protein belongs to the methyltransferase superfamily. RNA methyltransferase RsmG family.

The protein localises to the cytoplasm. Its function is as follows. Specifically methylates the N7 position of a guanine in 16S rRNA. The sequence is that of Ribosomal RNA small subunit methyltransferase G from Porphyromonas gingivalis (strain ATCC BAA-308 / W83).